A 180-amino-acid polypeptide reads, in one-letter code: Crossover junction endodeoxyribonuclease RuvC (180 aa).

Active-site residues include Asp7, Glu66, and Asp138. Mg(2+) contacts are provided by Asp7, Glu66, and Asp138.

This sequence belongs to the RuvC family. Homodimer which binds Holliday junction (HJ) DNA. The HJ becomes 2-fold symmetrical on binding to RuvC with unstacked arms; it has a different conformation from HJ DNA in complex with RuvA. In the full resolvosome a probable DNA-RuvA(4)-RuvB(12)-RuvC(2) complex forms which resolves the HJ. It depends on Mg(2+) as a cofactor.

It localises to the cytoplasm. It carries out the reaction Endonucleolytic cleavage at a junction such as a reciprocal single-stranded crossover between two homologous DNA duplexes (Holliday junction).. Its function is as follows. The RuvA-RuvB-RuvC complex processes Holliday junction (HJ) DNA during genetic recombination and DNA repair. Endonuclease that resolves HJ intermediates. Cleaves cruciform DNA by making single-stranded nicks across the HJ at symmetrical positions within the homologous arms, yielding a 5'-phosphate and a 3'-hydroxyl group; requires a central core of homology in the junction. The consensus cleavage sequence is 5'-(A/T)TT(C/G)-3'. Cleavage occurs on the 3'-side of the TT dinucleotide at the point of strand exchange. HJ branch migration catalyzed by RuvA-RuvB allows RuvC to scan DNA until it finds its consensus sequence, where it cleaves and resolves the cruciform DNA. The polypeptide is Crossover junction endodeoxyribonuclease RuvC (Herminiimonas arsenicoxydans).